A 208-amino-acid polypeptide reads, in one-letter code: Ras-related protein Rab-6A (208 aa).

An N-acetylserine modification is found at serine 2. Residues serine 23, valine 24, glycine 25, lysine 26, threonine 27, serine 28, aspartate 39, asparagine 40, tyrosine 42, and threonine 45 each coordinate GTP. A Mg(2+)-binding site is contributed by threonine 27. The Switch 1 motif lies at 32-50 (RFMYDSFDNTYQATIGIDF). Mg(2+) is bound by residues threonine 45 and aspartate 68. Residues 69-88 (TAGQERFRSLIPSYIRDSAA) carry the Switch 2 motif. GTP contacts are provided by glycine 71, asparagine 126, lysine 127, aspartate 129, serine 156, alanine 157, and lysine 158. 2 S-geranylgeranyl cysteine lipidation sites follow: cysteine 206 and cysteine 208. A Cysteine methyl ester modification is found at cysteine 208.

This sequence belongs to the small GTPase superfamily. Rab family. The cofactor is Mg(2+).

The protein resides in the golgi apparatus membrane. The enzyme catalyses GTP + H2O = GDP + phosphate + H(+). With respect to regulation, regulated by guanine nucleotide exchange factors (GEFs) which promote the exchange of bound GDP for free GTP. Regulated by GTPase activating proteins (GAPs) which increase the GTP hydrolysis activity. Inhibited by GDP dissociation inhibitors (GDIs). In terms of biological role, the small GTPases Rab are key regulators of intracellular membrane trafficking, from the formation of transport vesicles to their fusion with membranes. Rabs cycle between an inactive GDP-bound form and an active GTP-bound form that is able to recruit to membranes different sets of downstream effectors directly responsible for vesicle formation, movement, tethering and fusion. RAB6A acts as a regulator of COPI-independent retrograde transport from the Golgi apparatus towards the endoplasmic reticulum (ER). The polypeptide is Ras-related protein Rab-6A (RAB6A) (Gallus gallus (Chicken)).